The following is a 561-amino-acid chain: Rho guanine nucleotide exchange factor 9 (561 aa).

The 60-residue stretch at 53 to 112 (DSIVSAEAVWDHVTMANRELAFKAGDVIKVLDASNKDWWWGQIDDEEGWFPASFVRLWVN) folds into the SH3 domain. An interaction with GPHN region spans residues 145–155 (RDQMRANVINE). In terms of domain architecture, DH spans 148–332 (MRANVINEIM…RNVTQQINER (185 aa)). One can recognise a PH domain in the interval 363-470 (ELIYTGEMAW…WLRAFREERK (108 aa)). The interval 499-524 (KQKGVNSARSVPPSYPPPQDPLNQGQ) is disordered. Ser-547 carries the phosphoserine modification.

In terms of assembly, interacts with GPHN.

The protein localises to the cytoplasm. Its subcellular location is the postsynaptic density. Its function is as follows. Acts as a guanine nucleotide exchange factor (GEF) for CDC42. Promotes formation of GPHN clusters. This chain is Rho guanine nucleotide exchange factor 9 (ARHGEF9), found in Bos taurus (Bovine).